The primary structure comprises 249 residues: 2,3-bisphosphoglycerate-dependent phosphoglycerate mutase (249 aa).

Substrate is bound by residues 9-16, 22-23, Arg-61, 88-91, Lys-99, 115-116, and 184-185; these read RHGQSQWN, TG, ERHY, RR, and GN. His-10 functions as the Tele-phosphohistidine intermediate in the catalytic mechanism. Glu-88 acts as the Proton donor/acceptor in catalysis.

Belongs to the phosphoglycerate mutase family. BPG-dependent PGAM subfamily. Homodimer.

It carries out the reaction (2R)-2-phosphoglycerate = (2R)-3-phosphoglycerate. Its pathway is carbohydrate degradation; glycolysis; pyruvate from D-glyceraldehyde 3-phosphate: step 3/5. Catalyzes the interconversion of 2-phosphoglycerate and 3-phosphoglycerate. The chain is 2,3-bisphosphoglycerate-dependent phosphoglycerate mutase from Xylella fastidiosa (strain 9a5c).